The primary structure comprises 234 residues: Small ribosomal subunit protein uS2 (234 aa).

The protein belongs to the universal ribosomal protein uS2 family.

This is Small ribosomal subunit protein uS2 from Prochlorococcus marinus (strain MIT 9515).